A 572-amino-acid polypeptide reads, in one-letter code: Squalene synthase (572 aa).

2 consecutive transmembrane segments (helical) span residues 316 to 336 (SVFN…ELMF) and 492 to 512 (FFLI…LITW).

The protein belongs to the phytoene/squalene synthase family. In terms of assembly, monomer. It depends on Mg(2+) as a cofactor.

Its subcellular location is the endoplasmic reticulum membrane. It catalyses the reaction 2 (2E,6E)-farnesyl diphosphate + NADPH + H(+) = squalene + 2 diphosphate + NADP(+). It carries out the reaction 2 (2E,6E)-farnesyl diphosphate + NADH + H(+) = squalene + 2 diphosphate + NAD(+). It functions in the pathway terpene metabolism; lanosterol biosynthesis; lanosterol from farnesyl diphosphate: step 1/3. Catalyzes the condensation of 2 two farnesyl pyrophosphate moieties to form squalene. It is the first committed enzyme of the sterol biosynthesis pathway. Required for the biosynthesis of ergosterol. This is Squalene synthase (ERG9) from Mycosarcoma maydis (Corn smut fungus).